The chain runs to 448 residues: Ribosomal protein uS12 methylthiotransferase RimO (448 aa).

The 111-residue stretch at 16–126 (PRISFVSLGC…VVAAVHEAVP (111 aa)) folds into the MTTase N-terminal domain. [4Fe-4S] cluster-binding residues include cysteine 25, cysteine 61, cysteine 90, cysteine 157, cysteine 161, and cysteine 164. Residues 143-380 (LTPRHYAYLK…MEAQAGVSLK (238 aa)) form the Radical SAM core domain. Residues 383–448 (RAKVGKRLQV…DAYDLHGIAV (66 aa)) enclose the TRAM domain.

The protein belongs to the methylthiotransferase family. RimO subfamily. The cofactor is [4Fe-4S] cluster.

It localises to the cytoplasm. The enzyme catalyses L-aspartate(89)-[ribosomal protein uS12]-hydrogen + (sulfur carrier)-SH + AH2 + 2 S-adenosyl-L-methionine = 3-methylsulfanyl-L-aspartate(89)-[ribosomal protein uS12]-hydrogen + (sulfur carrier)-H + 5'-deoxyadenosine + L-methionine + A + S-adenosyl-L-homocysteine + 2 H(+). In terms of biological role, catalyzes the methylthiolation of an aspartic acid residue of ribosomal protein uS12. The polypeptide is Ribosomal protein uS12 methylthiotransferase RimO (Methylorubrum populi (strain ATCC BAA-705 / NCIMB 13946 / BJ001) (Methylobacterium populi)).